The sequence spans 145 residues: Peptide methionine sulfoxide reductase MsrB (145 aa).

The MsrB domain occupies 6–129 (KNERLKQLTD…NSAALRFIPV (124 aa)). Cysteine 118 acts as the Nucleophile in catalysis.

It belongs to the MsrB Met sulfoxide reductase family.

It catalyses the reaction L-methionyl-[protein] + [thioredoxin]-disulfide + H2O = L-methionyl-(R)-S-oxide-[protein] + [thioredoxin]-dithiol. In Listeria innocua serovar 6a (strain ATCC BAA-680 / CLIP 11262), this protein is Peptide methionine sulfoxide reductase MsrB.